A 309-amino-acid polypeptide reads, in one-letter code: Mitogen-activated protein kinase kinase 8 (309 aa).

Positions 53-305 (LDRISVLGSG…ASQLLNHPFL (253 aa)) constitute a Protein kinase domain. ATP contacts are provided by residues 59–67 (LGSGNGGTV) and lysine 82. Aspartate 167 acts as the Proton acceptor in catalysis. A phosphoserine mark is found at serine 195 and serine 201. Threonine 205 bears the Phosphothreonine mark.

Belongs to the protein kinase superfamily. STE Ser/Thr protein kinase family. MAP kinase kinase subfamily. Phosphorylation at Ser-195 and Ser-201 by MAP kinase kinase kinases positively regulates kinase activity.

The catalysed reaction is L-seryl-[protein] + ATP = O-phospho-L-seryl-[protein] + ADP + H(+). It catalyses the reaction L-threonyl-[protein] + ATP = O-phospho-L-threonyl-[protein] + ADP + H(+). The enzyme catalyses L-tyrosyl-[protein] + ATP = O-phospho-L-tyrosyl-[protein] + ADP + H(+). The sequence is that of Mitogen-activated protein kinase kinase 8 (MKK8) from Arabidopsis thaliana (Mouse-ear cress).